The chain runs to 361 residues: MSKFSFNIHHQHKKARSGIIVTAHGEMRTPAFMPVGTRGTVKAMLPESVAETGADILLGNTYHLMLQPTAERIVQLGGLHKFMNWDKPILTDSGGFQVMSLSKLCKITEEGVSFSSHINGDKYMLTPERSTEIQYLLGSTITMAFDECTPYPATFEEAKTSMQLTTRWANRSRNAFVKREGYAQFGIIQGSVYEELREQSAKDLVELDFEGYAIGGLAVGEGQELMFKVLDYAPEFLPQNKPRYLMGVGKPVDIIGAVSRGIDMFDCVIPTRSGRNGQAFTKYGTVNIRNSKYADDNKPLEHDCLCPACRNYSKAYLHHLVRIGEILGSMLMTWHNLTYFQNLMSRIRAYIKLGKDFDFDS.

Asp-92 functions as the Proton acceptor in the catalytic mechanism. Substrate contacts are provided by residues 92–96 (DSGGF), Asp-146, Gln-189, and Gly-216. The RNA binding stretch occupies residues 247-253 (GVGKPVD). Asp-266 acts as the Nucleophile in catalysis. Residues 271-275 (TRSGR) are RNA binding; important for wobble base 34 recognition. Residues Cys-304, Cys-306, Cys-309, and His-335 each coordinate Zn(2+).

The protein belongs to the queuine tRNA-ribosyltransferase family. Homodimer. Within each dimer, one monomer is responsible for RNA recognition and catalysis, while the other monomer binds to the replacement base PreQ1. The cofactor is Zn(2+).

The catalysed reaction is 7-aminomethyl-7-carbaguanine + guanosine(34) in tRNA = 7-aminomethyl-7-carbaguanosine(34) in tRNA + guanine. It functions in the pathway tRNA modification; tRNA-queuosine biosynthesis. In terms of biological role, catalyzes the base-exchange of a guanine (G) residue with the queuine precursor 7-aminomethyl-7-deazaguanine (PreQ1) at position 34 (anticodon wobble position) in tRNAs with GU(N) anticodons (tRNA-Asp, -Asn, -His and -Tyr). Catalysis occurs through a double-displacement mechanism. The nucleophile active site attacks the C1' of nucleotide 34 to detach the guanine base from the RNA, forming a covalent enzyme-RNA intermediate. The proton acceptor active site deprotonates the incoming PreQ1, allowing a nucleophilic attack on the C1' of the ribose to form the product. After dissociation, two additional enzymatic reactions on the tRNA convert PreQ1 to queuine (Q), resulting in the hypermodified nucleoside queuosine (7-(((4,5-cis-dihydroxy-2-cyclopenten-1-yl)amino)methyl)-7-deazaguanosine). The polypeptide is Queuine tRNA-ribosyltransferase (Rickettsia africae (strain ESF-5)).